A 420-amino-acid polypeptide reads, in one-letter code: Glucose-1-phosphate adenylyltransferase 2 (420 aa).

Alpha-D-glucose 1-phosphate contacts are provided by residues Tyr-109, Gly-175, 190–191 (EK), and Ser-208.

The protein belongs to the bacterial/plant glucose-1-phosphate adenylyltransferase family. As to quaternary structure, homotetramer.

It catalyses the reaction alpha-D-glucose 1-phosphate + ATP + H(+) = ADP-alpha-D-glucose + diphosphate. It functions in the pathway glycan biosynthesis; glycogen biosynthesis. Its function is as follows. Involved in the biosynthesis of ADP-glucose, a building block required for the elongation reactions to produce glycogen. Catalyzes the reaction between ATP and alpha-D-glucose 1-phosphate (G1P) to produce pyrophosphate and ADP-Glc. The polypeptide is Glucose-1-phosphate adenylyltransferase 2 (Pseudoalteromonas atlantica (strain T6c / ATCC BAA-1087)).